The following is a 504-amino-acid chain: UDP-N-acetylmuramoylalanine--D-glutamate ligase (504 aa).

129 to 135 contacts ATP; that stretch reads GTNGKTT.

It belongs to the MurCDEF family.

It localises to the cytoplasm. It carries out the reaction UDP-N-acetyl-alpha-D-muramoyl-L-alanine + D-glutamate + ATP = UDP-N-acetyl-alpha-D-muramoyl-L-alanyl-D-glutamate + ADP + phosphate + H(+). Its pathway is cell wall biogenesis; peptidoglycan biosynthesis. Its function is as follows. Cell wall formation. Catalyzes the addition of glutamate to the nucleotide precursor UDP-N-acetylmuramoyl-L-alanine (UMA). The polypeptide is UDP-N-acetylmuramoylalanine--D-glutamate ligase (Burkholderia mallei (strain ATCC 23344)).